We begin with the raw amino-acid sequence, 2089 residues long: Rho GTPase-activating protein 32 (2089 aa).

Residues 24 to 52 (TQLTDGDEEEREESFRKMKSSIHSEEDDF) form a disordered region. One can recognise a PX; atypical domain in the interval 131-245 (GSIQLSLSEE…LTWMEIDNKG (115 aa)). The SH3 domain occupies 259 to 321 (PAVGAAHVIK…PGHCVELINQ (63 aa)). Residues 372–567 (CDLGEHLLNS…FILNHVDVLF (196 aa)) enclose the Rho-GAP domain. Phosphoserine is present on residues serine 706, serine 709, serine 732, and serine 738. Residues 828–837 (KLSPSKKDAE) show a composition bias toward basic and acidic residues. The tract at residues 828 to 858 (KLSPSKKDAEAGGSQSQTPGSTASSEPVSPV) is disordered. Positions 840–854 (GSQSQTPGSTASSEP) are enriched in polar residues. A phosphoserine mark is found at serine 852, serine 856, serine 892, and serine 952. Disordered stretches follow at residues 955 to 1037 (QLQL…PPPP), 1119 to 1141 (CNQP…TDSG), and 1154 to 1197 (LHRN…SVST). Polar residues-rich tracts occupy residues 998–1014 (LSSQ…QTGA) and 1132–1141 (PTQSNTTDSG). The segment covering 1175-1191 (DSEKSDDHGSFPEDHAG) has biased composition (basic and acidic residues). Phosphoserine is present on serine 1206. A disordered region spans residues 1221 to 1368 (GTSVDKPHHS…GDPAPIFLSD (148 aa)). Positions 1225-1235 (DKPHHSSELTD) are enriched in basic and acidic residues. Residues 1262 to 1275 (TATMAYMMATPARA) show a composition bias toward low complexity. The interval 1395–1714 (RAPPLHLRAE…YNYAGLPPRP (320 aa)) is interaction with GAB2. Asymmetric dimethylarginine is present on residues arginine 1526 and arginine 1536. Serine 1588 bears the Phosphoserine mark. Residues 1688–2089 (SSRDFAFYNP…PHPDTQIHAE (402 aa)) form an interaction with FYN region. 2 disordered regions span residues 1801–1865 (PGKT…QSSL) and 1881–2002 (RAHQ…LERD). Basic and acidic residues predominate over residues 1826 to 1841 (GDERFYRKHPESEFDR). Polar residues predominate over residues 1850–1865 (STQAEKPSLPQKQSSL). Positions 1881 to 1892 (RAHQEASHRQLC) are enriched in basic and acidic residues. A compositionally biased stretch (polar residues) spans 1918 to 1939 (SEPSNYHNSGKYMTSGQGSLTL). Composition is skewed to basic and acidic residues over residues 1940–1954 (NHKE…DRPR) and 1961–1975 (PEKH…EEHF). Arginine 2039 carries the omega-N-methylarginine modification.

It belongs to the PX domain-containing GAP family. As to quaternary structure, interacts with NTRK1 (via cytoplasmic domain); the interaction is independent of the phosphorylation state of NTRK1. Interacts with SHC3 (via SH2 domain). Interacts with RASA1 (via SH3 domain); the interaction is necessary for the Ras activation and cell transforming activities of ARHGAP32. Interacts with GAB1 and GAB2. Interacts with CRK and CRKL. Found in a complex with CRKL and BCAR1; upon EGF stimulation BCAR1 may be replaced by EGFR. Interacts with NCK1 (via SH3 domain); NCK1 recruits phosphorylated BCAR1 to the complex. Isoform 2 interacts with FYN; the interaction appears to be dependent on tyrosine phosphorylation of ARHGAP32. Interacts with EGFR; the interaction requires EGF stimulation and is increased by SHC3. Interacts with CDC42; the interaction requires constitutively active CDC42. Interacts with CTNNB1, DLG4, CDH2 and GRIN2B. Interacts with GPHN. In terms of processing, isoform 2 is phosphorylated on multiple tyrosine residues by FYN. Phosphorylated tyrosine residues undergo dephosphorylation after stimulation of NMDA receptors. Phosphorylated in vitro by CaMK2 in the presence of calmodulin and calcium; which inhibits GAP activity. As to expression, isoform 1 and isoform 2 are highly expressed in brain, specially in cortex, corpus striatum, hippocampus and thalamus. Low levels in cerebellum, colon, small intestine, and kidney.

It localises to the postsynaptic density. The protein localises to the cell projection. It is found in the dendritic spine. The protein resides in the cytoplasm. Its subcellular location is the cell cortex. It localises to the endosome membrane. The protein localises to the golgi apparatus membrane. It is found in the endoplasmic reticulum membrane. The protein resides in the membrane. Its function is as follows. GTPase-activating protein (GAP) promoting GTP hydrolysis on RHOA, CDC42 and RAC1 small GTPases. May be involved in the differentiation of neuronal cells during the formation of neurite extensions. Involved in NMDA receptor activity-dependent actin reorganization in dendritic spines. May mediate cross-talks between Ras- and Rho-regulated signaling pathways in cell growth regulation. Isoform 2 has higher GAP activity. This Mus musculus (Mouse) protein is Rho GTPase-activating protein 32 (Arhgap32).